The following is a 122-amino-acid chain: NADH-quinone oxidoreductase subunit A (122 aa).

Transmembrane regions (helical) follow at residues 10-30, 66-86, and 91-111; these read MIVL…LTLG, IFAL…PWAV, and LGLF…VGLA.

This sequence belongs to the complex I subunit 3 family. As to quaternary structure, NDH-1 is composed of 14 different subunits. Subunits NuoA, H, J, K, L, M, N constitute the membrane sector of the complex.

The protein resides in the cell membrane. The catalysed reaction is a quinone + NADH + 5 H(+)(in) = a quinol + NAD(+) + 4 H(+)(out). Its function is as follows. NDH-1 shuttles electrons from NADH, via FMN and iron-sulfur (Fe-S) centers, to quinones in the respiratory chain. The immediate electron acceptor for the enzyme in this species is believed to be a menaquinone. Couples the redox reaction to proton translocation (for every two electrons transferred, four hydrogen ions are translocated across the cytoplasmic membrane), and thus conserves the redox energy in a proton gradient. The chain is NADH-quinone oxidoreductase subunit A from Bacillus thuringiensis subsp. konkukian (strain 97-27).